Consider the following 221-residue polypeptide: uncharacterized protein (221 aa).

Positions M1–R22 are disordered. A compositionally biased stretch (polar residues) spans T7 to A16.

This sequence belongs to the IIV-6 259R family.

This is an uncharacterized protein from Invertebrate iridescent virus 3 (IIV-3).